The chain runs to 197 residues: dTTP/UTP pyrophosphatase (197 aa).

Asp70 functions as the Proton acceptor in the catalytic mechanism.

The protein belongs to the Maf family. YhdE subfamily. As to quaternary structure, homodimer. Can also form homotetramers. The cofactor is a divalent metal cation.

It is found in the cytoplasm. The enzyme catalyses dTTP + H2O = dTMP + diphosphate + H(+). It catalyses the reaction UTP + H2O = UMP + diphosphate + H(+). The catalysed reaction is 5-methyl-UTP + H2O = 5-methyl-UMP + diphosphate + H(+). It carries out the reaction psi-UTP + H2O = psi-UMP + diphosphate + H(+). The enzyme catalyses 5-methyl-CTP + H2O = 5-methyl-CMP + diphosphate + H(+). Nucleoside triphosphate pyrophosphatase that hydrolyzes dTTP and UTP. Can also hydrolyze TTP and the modified nucleotides 5-methyl-UTP (m(5)UTP), pseudo-UTP and 5-methyl-CTP (m(5)CTP). Has weak activity with CTP. May have a dual role in cell division arrest and in preventing the incorporation of modified nucleotides into cellular nucleic acids. Important in maintenance of cell shape. This chain is dTTP/UTP pyrophosphatase (yhdE), found in Escherichia coli (strain K12).